We begin with the raw amino-acid sequence, 232 residues long: Orotidine 5'-phosphate decarboxylase (232 aa).

Substrate contacts are provided by residues aspartate 14, lysine 36, aspartate 63–threonine 72, threonine 122, arginine 183, glutamine 192, glycine 212, and arginine 213. Lysine 65 acts as the Proton donor in catalysis.

It belongs to the OMP decarboxylase family. Type 1 subfamily. Homodimer.

It carries out the reaction orotidine 5'-phosphate + H(+) = UMP + CO2. It functions in the pathway pyrimidine metabolism; UMP biosynthesis via de novo pathway; UMP from orotate: step 2/2. Functionally, catalyzes the decarboxylation of orotidine 5'-monophosphate (OMP) to uridine 5'-monophosphate (UMP). This Psychrobacter arcticus (strain DSM 17307 / VKM B-2377 / 273-4) protein is Orotidine 5'-phosphate decarboxylase.